The chain runs to 695 residues: DNA ligase (695 aa).

NAD(+) contacts are provided by residues 36 to 40 (DADYD), 85 to 86 (SL), and Glu-123. Lys-125 functions as the N6-AMP-lysine intermediate in the catalytic mechanism. Positions 146, 182, 318, and 342 each coordinate NAD(+). The Zn(2+) site is built by Cys-436, Cys-439, Cys-454, and Cys-460. Residues 617–695 (LQSGDLAGKT…EDGLKALLSQ (79 aa)) enclose the BRCT domain.

This sequence belongs to the NAD-dependent DNA ligase family. LigA subfamily. The cofactor is Mg(2+). Requires Mn(2+) as cofactor.

The catalysed reaction is NAD(+) + (deoxyribonucleotide)n-3'-hydroxyl + 5'-phospho-(deoxyribonucleotide)m = (deoxyribonucleotide)n+m + AMP + beta-nicotinamide D-nucleotide.. DNA ligase that catalyzes the formation of phosphodiester linkages between 5'-phosphoryl and 3'-hydroxyl groups in double-stranded DNA using NAD as a coenzyme and as the energy source for the reaction. It is essential for DNA replication and repair of damaged DNA. This Bordetella avium (strain 197N) protein is DNA ligase.